Here is a 289-residue protein sequence, read N- to C-terminus: tRNA pseudouridine synthase A (289 aa).

D53 serves as the catalytic Nucleophile. A substrate-binding site is contributed by Y119.

The protein belongs to the tRNA pseudouridine synthase TruA family. In terms of assembly, homodimer.

It catalyses the reaction uridine(38/39/40) in tRNA = pseudouridine(38/39/40) in tRNA. In terms of biological role, formation of pseudouridine at positions 38, 39 and 40 in the anticodon stem and loop of transfer RNAs. This chain is tRNA pseudouridine synthase A, found in Corynebacterium glutamicum (strain ATCC 13032 / DSM 20300 / JCM 1318 / BCRC 11384 / CCUG 27702 / LMG 3730 / NBRC 12168 / NCIMB 10025 / NRRL B-2784 / 534).